Here is a 369-residue protein sequence, read N- to C-terminus: Histidinol-phosphate aminotransferase (369 aa).

An N6-(pyridoxal phosphate)lysine modification is found at K223.

It belongs to the class-II pyridoxal-phosphate-dependent aminotransferase family. Histidinol-phosphate aminotransferase subfamily. In terms of assembly, homodimer. Pyridoxal 5'-phosphate serves as cofactor.

The enzyme catalyses L-histidinol phosphate + 2-oxoglutarate = 3-(imidazol-4-yl)-2-oxopropyl phosphate + L-glutamate. It functions in the pathway amino-acid biosynthesis; L-histidine biosynthesis; L-histidine from 5-phospho-alpha-D-ribose 1-diphosphate: step 7/9. Its function is as follows. Catalyzes the conversion of imidazole acetol phosphate to histidinol phosphate. Can also transaminate aromatic amino acids and histidine in addition to histidinol phosphate. The polypeptide is Histidinol-phosphate aminotransferase (Zymomonas mobilis subsp. mobilis (strain ATCC 31821 / ZM4 / CP4)).